A 338-amino-acid polypeptide reads, in one-letter code: Erlin-2 (338 aa).

The Cytoplasmic portion of the chain corresponds to 1-3; the sequence is MAQ. A helical transmembrane segment spans residues 4–24; that stretch reads LGAVVAVAASFFCASLFSAVH. Residues 25–338 lie on the Lumenal side of the membrane; it reads KIEEGHIGVY…DEPMEADSEN (314 aa). N106 carries an N-linked (GlcNAc...) asparagine glycan. The interaction with ERLIN1 stretch occupies residues 177-309; that stretch reads EAIRRNYELM…DIPNMFMDSA (133 aa). An N6-acetyllysine modification is found at K267.

The protein belongs to the band 7/mec-2 family. Forms a heteromeric complex with ERLIN1. In complex with ERLIN1, interacts with RNF170. Interacts with activated ITPR1, independently of the degree of ITPR1 polyubiquitination. Interacts with SCAP, INSIG1, SREBF1 and SREBF2 under cholesterol sufficiency conditions; indicative for an association with the SCAP-SREBP-INSIG complex. Probably part of an AMFR/gp78 and INSIG1-containing ubiquitin ligase complex involved in ERAD of HMGCR. Interacts with TMUB1; TMUB1 bridges the association with AMFR. Interacts with SYVN1 and RNF139. Interacts with TMEM259. Interacts with TMEM41B. Deubiquitinated by USP25; leading to stabilization.

The protein localises to the endoplasmic reticulum membrane. Its function is as follows. Component of the ERLIN1/ERLIN2 complex which mediates the endoplasmic reticulum-associated degradation (ERAD) of inositol 1,4,5-trisphosphate receptors (IP3Rs) such as ITPR1. Promotes sterol-accelerated ERAD of HMGCR probably implicating an AMFR/gp78-containing ubiquitin ligase complex. Involved in regulation of cellular cholesterol homeostasis by regulation the SREBP signaling pathway. May promote ER retention of the SCAP-SREBF complex. The protein is Erlin-2 (ERLIN2) of Bos taurus (Bovine).